The primary structure comprises 167 residues: NAD(P)H-quinone oxidoreductase subunit I, chloroplastic (167 aa).

4Fe-4S ferredoxin-type domains are found at residues 55-84 (GRIHFEFDKCIACEVCVRVCPIDLPVVDWK) and 95-124 (LNYSIDFGICIFCGNCVEYCPTNCLSMTEE). [4Fe-4S] cluster-binding residues include C64, C67, C70, C74, C104, C107, C110, and C114.

The protein belongs to the complex I 23 kDa subunit family. In terms of assembly, NDH is composed of at least 16 different subunits, 5 of which are encoded in the nucleus. The cofactor is [4Fe-4S] cluster.

The protein localises to the plastid. The protein resides in the chloroplast thylakoid membrane. The enzyme catalyses a plastoquinone + NADH + (n+1) H(+)(in) = a plastoquinol + NAD(+) + n H(+)(out). It carries out the reaction a plastoquinone + NADPH + (n+1) H(+)(in) = a plastoquinol + NADP(+) + n H(+)(out). Its function is as follows. NDH shuttles electrons from NAD(P)H:plastoquinone, via FMN and iron-sulfur (Fe-S) centers, to quinones in the photosynthetic chain and possibly in a chloroplast respiratory chain. The immediate electron acceptor for the enzyme in this species is believed to be plastoquinone. Couples the redox reaction to proton translocation, and thus conserves the redox energy in a proton gradient. The protein is NAD(P)H-quinone oxidoreductase subunit I, chloroplastic of Jasminum nudiflorum (Winter jasmine).